Here is a 192-residue protein sequence, read N- to C-terminus: Peptidyl-tRNA hydrolase (192 aa).

Tyr-17 lines the tRNA pocket. His-22 functions as the Proton acceptor in the catalytic mechanism. 3 residues coordinate tRNA: Phe-68, Asn-70, and Asn-116.

It belongs to the PTH family. In terms of assembly, monomer.

The protein localises to the cytoplasm. The catalysed reaction is an N-acyl-L-alpha-aminoacyl-tRNA + H2O = an N-acyl-L-amino acid + a tRNA + H(+). Functionally, hydrolyzes ribosome-free peptidyl-tRNAs (with 1 or more amino acids incorporated), which drop off the ribosome during protein synthesis, or as a result of ribosome stalling. Catalyzes the release of premature peptidyl moieties from peptidyl-tRNA molecules trapped in stalled 50S ribosomal subunits, and thus maintains levels of free tRNAs and 50S ribosomes. This Xylella fastidiosa (strain M12) protein is Peptidyl-tRNA hydrolase.